Consider the following 431-residue polypeptide: Beclin-2 (431 aa).

The segment at 17 to 74 (LSGSSESRSLPAAPAPTSGQAEPGDTREPGVTTREVTDAEEQQDGASSRSPPGDGSVS) is disordered. The stretch at 125 to 248 (LLEQLDIQLA…ARVQRDRLKE (124 aa)) forms a coiled coil. Positions 173 to 243 (EARLVQELED…NQLQYARVQR (71 aa)) are required for homodimer formation.

The protein belongs to the beclin family. As to quaternary structure, homodimer (via coiled-coil domain). Interacts (via coiled-coil domain) with ATG14 (via coiled-coil domain); this interaction is tighter than BECN2 self-association. Interacts with AMBRA1, UVRAG and PIK3C3/VPS34; these interactions are not disrupted by starvation. Does not interact with RUBCN. Interacts (via N-terminus) with GPRASP1/GASP1; the interaction is direct. Present in fetal and adult brain (at protein level).

It is found in the cytoplasm. Involved in 2 distinct lysosomal degradation pathways: acts as a regulator of autophagy and as a regulator of G-protein coupled receptors turnover. Regulates degradation in lysosomes of a variety of G-protein coupled receptors via its interaction with GPRASP1/GASP1. The polypeptide is Beclin-2 (Homo sapiens (Human)).